A 29-amino-acid polypeptide reads, in one-letter code: Cyclotide cter-K (29 aa).

Residues 1–29 constitute a cross-link (cyclopeptide (His-Asn)); sequence HEPCGESCVFIPCITTVVGCSCKNKVCYN. 3 cysteine pairs are disulfide-bonded: C4–C20, C8–C22, and C13–C27.

Post-translationally, contains 3 disulfide bonds. In terms of processing, this is a cyclic peptide.

Its function is as follows. Probably participates in a plant defense mechanism. The protein is Cyclotide cter-K of Clitoria ternatea (Butterfly pea).